Reading from the N-terminus, the 161-residue chain is Allophycocyanin alpha chain (161 aa).

Residue N71 is modified to N4-methylasparagine. (2R,3E)-phycocyanobilin is bound at residue C81.

It belongs to the phycobiliprotein family. In terms of assembly, component of the phycobilisome. Heterodimer of an alpha and a beta chain. In terms of processing, contains one covalently linked phycocyanobilin chromophore.

It is found in the cellular thylakoid membrane. Functionally, light-harvesting photosynthetic bile pigment-protein from the phycobiliprotein complex. Allophycocyanin has a maximum absorption at approximately 650 nanometers. This chain is Allophycocyanin alpha chain (apcA), found in Arthrospira platensis (Spirulina platensis).